Consider the following 358-residue polypeptide: 5,10-methenyltetrahydromethanopterin hydrogenase (358 aa).

The protein belongs to the HMD family. As to quaternary structure, homotetramer.

It carries out the reaction 5,10-methenyl-5,6,7,8-tetrahydromethanopterin + H2 = 5,10-methylenetetrahydromethanopterin + H(+). The protein operates within one-carbon metabolism; methanogenesis from CO(2); 5,10-methylene-5,6,7,8-tetrahydromethanopterin from 5,10-methenyl-5,6,7,8-tetrahydromethanopterin (hydrogen route): step 1/1. Activity requires salt; 100 mM potassium phosphate, potassium chloride, and sodium chloride are equally effective. Catalyzes the reversible reduction of methenyl-H(4)MPT(+) to methylene-H(4)MPT. The polypeptide is 5,10-methenyltetrahydromethanopterin hydrogenase (Methanopyrus kandleri (strain AV19 / DSM 6324 / JCM 9639 / NBRC 100938)).